The primary structure comprises 413 residues: Multidrug resistance protein MdtA (413 aa).

The N-terminal stretch at 1–20 (MKGSNTFRWAIAIGVVVAAA) is a signal peptide. Disordered stretches follow at residues 31–57 (SPTAAPGVAAQAPHTAAAGRRGMRDGP) and 392–413 (PQTTMADEKSPSRHEGQKGARA). Basic and acidic residues predominate over residues 397 to 413 (ADEKSPSRHEGQKGARA).

This sequence belongs to the membrane fusion protein (MFP) (TC 8.A.1) family. As to quaternary structure, part of a tripartite efflux system composed of MdtA, MdtB and MdtC.

The protein localises to the cell inner membrane. In Salmonella heidelberg (strain SL476), this protein is Multidrug resistance protein MdtA.